A 472-amino-acid chain; its full sequence is MSTKVELYMEIGTVITDLEYHTKYMLKKLLGRGAYAQCYLAEIESGEQYAMKVVRLKDIKSRKVHEKLESEIAIHSKLDNPNVVKMYRSFRSSEYVFMVLELCERGALDALLKRNGKLKERHVARFVKQTVEGLIYLHNSVSVVHRDLKLGNLFLDSKFNVKIGDFGLSAVIKDGEKKVTMCGTPNYIAPEVLFGKASGHSFEADIWSLGVIIYTLLVGVPPFQKKNVEDIYKMIKLNNYIFPENCDLSSEAIDLITQILNTNPLERPTLEHILSHKFLSKKEHFLMKIYRNLMTNRTEEGVVDTDYVLFSIPVTKLRGVGYVLKSGVYGIYFSDHRNLMLKPNRKSVIYLNSTIESGKRVFYKEEHLVEKIPAEIAESYKGLQYFIRTFDNGFSFLDVEPCFIVKIRKIECGFLFVMADSTIVFDFVDGWRVVLSRCGERVSCYNGLGLASFNQEIRGRCIEILRGCLGCG.

The Protein kinase domain maps to 24 to 279 (YMLKKLLGRG…LEHILSHKFL (256 aa)). Residues 30–38 (LGRGAYAQC) and K52 contribute to the ATP site. D147 serves as the catalytic Proton acceptor. The 86-residue stretch at 307–392 (YVLFSIPVTK…LQYFIRTFDN (86 aa)) folds into the POLO box domain.

It belongs to the protein kinase superfamily. Ser/Thr protein kinase family. CDC5/Polo subfamily.

The protein resides in the cytoplasm. It is found in the cytoskeleton. It localises to the microtubule organizing center. The protein localises to the spindle pole body. It carries out the reaction L-seryl-[protein] + ATP = O-phospho-L-seryl-[protein] + ADP + H(+). The catalysed reaction is L-threonyl-[protein] + ATP = O-phospho-L-threonyl-[protein] + ADP + H(+). In terms of biological role, protein kinase required for the cell cycle where it is involved in mitotic exit. Required to form a bipolar spindle, the actin ring and septum. Functions upstream of the whole septum formation pathway, including actin ring formation (regulated by late septation genes) and septal material deposition (regulated by early septation genes). Behaves as a 'septum-promoting factor', and could also be involved in inducing other late events of cell division. In Encephalitozoon cuniculi (strain GB-M1) (Microsporidian parasite), this protein is Probable cell cycle serine/threonine-protein kinase CDC5 homolog (CDC5).